Reading from the N-terminus, the 32-residue chain is Coenzyme PQQ synthesis protein A (32 aa).

Positions glutamate 16–tyrosine 20 form a cross-link, pyrroloquinoline quinone (Glu-Tyr).

This sequence belongs to the PqqA family.

It participates in cofactor biosynthesis; pyrroloquinoline quinone biosynthesis. In terms of biological role, required for coenzyme pyrroloquinoline quinone (PQQ) biosynthesis. PQQ is probably formed by cross-linking a specific glutamate to a specific tyrosine residue and excising these residues from the peptide. The polypeptide is Coenzyme PQQ synthesis protein A (Dinoroseobacter shibae (strain DSM 16493 / NCIMB 14021 / DFL 12)).